Reading from the N-terminus, the 64-residue chain is Large ribosomal subunit protein bL35 (64 aa).

Residues 1–15 (MPKNKTHSGASKRFR) are compositionally biased toward basic residues. The segment at 1–20 (MPKNKTHSGASKRFRVTGSG) is disordered.

The protein belongs to the bacterial ribosomal protein bL35 family.

The chain is Large ribosomal subunit protein bL35 from Nocardioides sp. (strain ATCC BAA-499 / JS614).